A 333-amino-acid chain; its full sequence is uncharacterized protein (333 aa).

This is an uncharacterized protein from Escherichia coli (Bacteriophage T4).